The sequence spans 94 residues: ATP-dependent Clp protease adapter protein ClpS (94 aa).

It belongs to the ClpS family. In terms of assembly, binds to the N-terminal domain of the chaperone ClpA.

In terms of biological role, involved in the modulation of the specificity of the ClpAP-mediated ATP-dependent protein degradation. This chain is ATP-dependent Clp protease adapter protein ClpS, found in Thermosynechococcus vestitus (strain NIES-2133 / IAM M-273 / BP-1).